A 185-amino-acid chain; its full sequence is Ribosome-recycling factor (185 aa).

Belongs to the RRF family.

It localises to the cytoplasm. In terms of biological role, responsible for the release of ribosomes from messenger RNA at the termination of protein biosynthesis. May increase the efficiency of translation by recycling ribosomes from one round of translation to another. The chain is Ribosome-recycling factor from Mycobacterium avium (strain 104).